The following is a 198-amino-acid chain: Recombination protein RecR (198 aa).

Residues 58 to 73 (CKVCQTLTDKEICPIC) form a C4-type zinc finger. The Toprim domain maps to 81 to 175 (KVIMVVENTR…KVSRIASGVP (95 aa)).

Belongs to the RecR family.

May play a role in DNA repair. It seems to be involved in an RecBC-independent recombinational process of DNA repair. It may act with RecF and RecO. The polypeptide is Recombination protein RecR (Lachnoclostridium phytofermentans (strain ATCC 700394 / DSM 18823 / ISDg) (Clostridium phytofermentans)).